Reading from the N-terminus, the 489-residue chain is Poly(A) RNA polymerase GLD2 (489 aa).

The disordered stretch occupies residues 93–118 (RQRFSCPSPHNQSARNSNFTSQPVTR). Over residues 100–116 (SPHNQSARNSNFTSQPV) the composition is skewed to polar residues. Mg(2+) is bound by residues Asp-219 and Asp-221. The PAP-associated domain occupies 386–440 (SLGDLFLGFLRYYATVFKWDKQVISVRMARTLPKSNCKEWKDKFICVEEPFNRTN).

This sequence belongs to the DNA polymerase type-B-like family. GLD2 subfamily. It depends on Mg(2+) as a cofactor. Mn(2+) is required as a cofactor.

It is found in the cytoplasm. The catalysed reaction is RNA(n) + ATP = RNA(n)-3'-adenine ribonucleotide + diphosphate. In terms of biological role, cytoplasmic poly(A) RNA polymerase that adds successive AMP monomers to the 3'-end of specific RNAs, forming a poly(A) tail. In contrast to the canonical nuclear poly(A) RNA polymerase, it only adds poly(A) to selected cytoplasmic mRNAs. May not play a role in replication-dependent histone mRNA degradation. The polypeptide is Poly(A) RNA polymerase GLD2 (Danio rerio (Zebrafish)).